Here is a 423-residue protein sequence, read N- to C-terminus: uncharacterized protein (423 aa).

This is an uncharacterized protein from Pasteurella multocida (strain Pm70).